A 184-amino-acid chain; its full sequence is Ribonuclease HII (184 aa).

An RNase H type-2 domain is found at 2 to 184; the sequence is AKICGIDEAG…KPKLAQSSLF (183 aa). Asp-8, Glu-9, and Asp-95 together coordinate a divalent metal cation.

This sequence belongs to the RNase HII family. Mn(2+) is required as a cofactor. The cofactor is Mg(2+).

Its subcellular location is the cytoplasm. The enzyme catalyses Endonucleolytic cleavage to 5'-phosphomonoester.. Endonuclease that specifically degrades the RNA of RNA-DNA hybrids. The chain is Ribonuclease HII from Campylobacter concisus (strain 13826).